Consider the following 205-residue polypeptide: Small ribosomal subunit protein uS2 (205 aa).

It belongs to the universal ribosomal protein uS2 family.

The protein is Small ribosomal subunit protein uS2 of Methanoculleus marisnigri (strain ATCC 35101 / DSM 1498 / JR1).